The primary structure comprises 389 residues: NADH-quinone oxidoreductase subunit D (389 aa).

Belongs to the complex I 49 kDa subunit family. NDH-1 is composed of 14 different subunits. Subunits NuoB, C, D, E, F, and G constitute the peripheral sector of the complex.

It localises to the cell inner membrane. It catalyses the reaction a quinone + NADH + 5 H(+)(in) = a quinol + NAD(+) + 4 H(+)(out). In terms of biological role, NDH-1 shuttles electrons from NADH, via FMN and iron-sulfur (Fe-S) centers, to quinones in the respiratory chain. The immediate electron acceptor for the enzyme in this species is believed to be ubiquinone. Couples the redox reaction to proton translocation (for every two electrons transferred, four hydrogen ions are translocated across the cytoplasmic membrane), and thus conserves the redox energy in a proton gradient. In Rickettsia prowazekii (strain Madrid E), this protein is NADH-quinone oxidoreductase subunit D.